Consider the following 115-residue polypeptide: Large ribosomal subunit protein uL22 (115 aa).

This sequence belongs to the universal ribosomal protein uL22 family. As to quaternary structure, part of the 50S ribosomal subunit.

This protein binds specifically to 23S rRNA; its binding is stimulated by other ribosomal proteins, e.g. L4, L17, and L20. It is important during the early stages of 50S assembly. It makes multiple contacts with different domains of the 23S rRNA in the assembled 50S subunit and ribosome. Its function is as follows. The globular domain of the protein is located near the polypeptide exit tunnel on the outside of the subunit, while an extended beta-hairpin is found that lines the wall of the exit tunnel in the center of the 70S ribosome. In Nitrosospira multiformis (strain ATCC 25196 / NCIMB 11849 / C 71), this protein is Large ribosomal subunit protein uL22.